Consider the following 92-residue polypeptide: Small ribosomal subunit protein uS19 (92 aa).

Belongs to the universal ribosomal protein uS19 family.

Its function is as follows. Protein S19 forms a complex with S13 that binds strongly to the 16S ribosomal RNA. The chain is Small ribosomal subunit protein uS19 from Rickettsia bellii (strain OSU 85-389).